A 141-amino-acid chain; its full sequence is Ribonuclease P protein component (141 aa).

Disordered regions lie at residues 37–56 and 114–141; these read RTEE…VGFT and RRIT…VNGK. The span at 114-124 shows a compositional bias: basic and acidic residues; it reads RRITAKGERRS.

Belongs to the RnpA family. As to quaternary structure, consists of a catalytic RNA component (M1 or rnpB) and a protein subunit.

It carries out the reaction Endonucleolytic cleavage of RNA, removing 5'-extranucleotides from tRNA precursor.. Its function is as follows. RNaseP catalyzes the removal of the 5'-leader sequence from pre-tRNA to produce the mature 5'-terminus. It can also cleave other RNA substrates such as 4.5S RNA. The protein component plays an auxiliary but essential role in vivo by binding to the 5'-leader sequence and broadening the substrate specificity of the ribozyme. The polypeptide is Ribonuclease P protein component (Brucella melitensis biotype 1 (strain ATCC 23456 / CCUG 17765 / NCTC 10094 / 16M)).